We begin with the raw amino-acid sequence, 234 residues long: Ribosomal RNA large subunit methyltransferase E (234 aa).

The interval 1 to 37 (MSDDDRRRWKGPGPERQDSGRRSTERKVIARNARTES) is disordered. Gly91, Trp93, Asp109, Asp125, and Asp149 together coordinate S-adenosyl-L-methionine. The active-site Proton acceptor is Lys189.

Belongs to the class I-like SAM-binding methyltransferase superfamily. RNA methyltransferase RlmE family.

The protein localises to the cytoplasm. It carries out the reaction uridine(2552) in 23S rRNA + S-adenosyl-L-methionine = 2'-O-methyluridine(2552) in 23S rRNA + S-adenosyl-L-homocysteine + H(+). Specifically methylates the uridine in position 2552 of 23S rRNA at the 2'-O position of the ribose in the fully assembled 50S ribosomal subunit. The sequence is that of Ribosomal RNA large subunit methyltransferase E from Hyphomonas neptunium (strain ATCC 15444).